Here is a 300-residue protein sequence, read N- to C-terminus: Phosphatidylserine decarboxylase proenzyme (300 aa).

Catalysis depends on charge relay system; for autoendoproteolytic cleavage activity residues aspartate 113, histidine 169, and serine 256. Serine 256 acts as the Schiff-base intermediate with substrate; via pyruvic acid; for decarboxylase activity in catalysis. Serine 256 bears the Pyruvic acid (Ser); by autocatalysis mark.

Belongs to the phosphatidylserine decarboxylase family. PSD-B subfamily. Prokaryotic type II sub-subfamily. In terms of assembly, heterodimer of a large membrane-associated beta subunit and a small pyruvoyl-containing alpha subunit. Pyruvate serves as cofactor. Post-translationally, is synthesized initially as an inactive proenzyme. Formation of the active enzyme involves a self-maturation process in which the active site pyruvoyl group is generated from an internal serine residue via an autocatalytic post-translational modification. Two non-identical subunits are generated from the proenzyme in this reaction, and the pyruvate is formed at the N-terminus of the alpha chain, which is derived from the carboxyl end of the proenzyme. The autoendoproteolytic cleavage occurs by a canonical serine protease mechanism, in which the side chain hydroxyl group of the serine supplies its oxygen atom to form the C-terminus of the beta chain, while the remainder of the serine residue undergoes an oxidative deamination to produce ammonia and the pyruvoyl prosthetic group on the alpha chain. During this reaction, the Ser that is part of the protease active site of the proenzyme becomes the pyruvoyl prosthetic group, which constitutes an essential element of the active site of the mature decarboxylase.

It is found in the cell membrane. The enzyme catalyses a 1,2-diacyl-sn-glycero-3-phospho-L-serine + H(+) = a 1,2-diacyl-sn-glycero-3-phosphoethanolamine + CO2. It participates in phospholipid metabolism; phosphatidylethanolamine biosynthesis; phosphatidylethanolamine from CDP-diacylglycerol: step 2/2. In terms of biological role, catalyzes the formation of phosphatidylethanolamine (PtdEtn) from phosphatidylserine (PtdSer). This chain is Phosphatidylserine decarboxylase proenzyme, found in Ruminiclostridium cellulolyticum (strain ATCC 35319 / DSM 5812 / JCM 6584 / H10) (Clostridium cellulolyticum).